We begin with the raw amino-acid sequence, 66 residues long: Phylloseptin-S1 (66 aa).

The N-terminal stretch at 1-22 (MAFLKKSLFLVLFLGLVSLSIC) is a signal peptide. Residues 23-46 (EEEKRETEEEEHDQEEDDKSEEKR) constitute a propeptide that is removed on maturation. The segment at 25–44 (EKRETEEEEHDQEEDDKSEE) is disordered. Over residues 30–41 (EEEEHDQEEDDK) the composition is skewed to acidic residues. The residue at position 65 (F65) is a Phenylalanine amide.

As to expression, expressed by the skin glands.

The protein resides in the secreted. Its subcellular location is the target cell membrane. Its function is as follows. Antimicrobial peptide with high activity against Gram-positive bacteria, low activity against Gram-negative bacteria, and moderate activity against fungi. Acts on bacterial biofilms (S.aureus) with the same potency than on bacteria. Acts by causing bacterial membrane disruption inducing leakage of the intracellular content followed by cell death. It adopts an alpha-helical amphipathic structure in membrane environments. Also shows highly potent antiparasitic activity against Leishmania species. Shows low hemolytic activity on horse and human erythrocytes (LC(50)=39 uM). Is also active on human monocytes (IC(50)=23 uM). The chain is Phylloseptin-S1 from Phyllomedusa sauvagei (Sauvage's leaf frog).